A 661-amino-acid polypeptide reads, in one-letter code: Transketolase (661 aa).

His30 is a binding site for substrate. Thiamine diphosphate contacts are provided by residues His70 and 118-120 (GPL). The disordered stretch occupies residues 99 to 118 (STTPGHPEFRDTPGVEATTG). A Mg(2+)-binding site is contributed by Asp159. The thiamine diphosphate site is built by Gly160 and Asn189. Mg(2+) is bound by residues Asn189 and Val191. His266, Arg357, and Ser384 together coordinate substrate. Residue His266 coordinates thiamine diphosphate. Glu411 (proton donor) is an active-site residue. Phe437 is a binding site for thiamine diphosphate. Residues His461, Asp469, and Arg520 each contribute to the substrate site.

It belongs to the transketolase family. In terms of assembly, homodimer. Mg(2+) serves as cofactor. The cofactor is Ca(2+). Mn(2+) is required as a cofactor. It depends on Co(2+) as a cofactor. Requires thiamine diphosphate as cofactor.

The catalysed reaction is D-sedoheptulose 7-phosphate + D-glyceraldehyde 3-phosphate = aldehydo-D-ribose 5-phosphate + D-xylulose 5-phosphate. In terms of biological role, catalyzes the transfer of a two-carbon ketol group from a ketose donor to an aldose acceptor, via a covalent intermediate with the cofactor thiamine pyrophosphate. The polypeptide is Transketolase (tkt) (Physarum polycephalum (Slime mold)).